A 364-amino-acid chain; its full sequence is MNPLLERLCARLSDTIPPGTETPYASPSHARTEEAPWSGITGEEALAVARLPASDILDILAVAQAVRSARKGPLATTCGIVNAKSGRCGEDCAFCAQSSHHDTGAPVHALLGPDALLRHAEELARAGVRRFGIVTSGNALSEREFDAVCHAARLLRDRVDIGLCASLGQLATGSAESGNRGERARRLKDAGISSYHHNLETARSFFPQVCTTHPYDDDIATVREAARAGLRTCCGGILGLGETWEHRVELALTLRELDVDSIPLNFLHPVPGTRLGHRSPLPPMEALRAIAVFRLLHPQRDILVCGGRETTLGQWQSWVFAAGANGLMVGNYLTTAGRALAEDMEMLAALGVGEIPRNGEEARA.

The disordered stretch occupies residues 14 to 36 (DTIPPGTETPYASPSHARTEEAP). A Radical SAM core domain is found at 70–308 (RKGPLATTCG…QRDILVCGGR (239 aa)). 3 residues coordinate [4Fe-4S] cluster: Cys88, Cys92, and Cys95. 2 residues coordinate [2Fe-2S] cluster: Cys164 and Cys233.

It belongs to the radical SAM superfamily. Biotin synthase family. In terms of assembly, homodimer. [4Fe-4S] cluster serves as cofactor. Requires [2Fe-2S] cluster as cofactor.

It carries out the reaction (4R,5S)-dethiobiotin + (sulfur carrier)-SH + 2 reduced [2Fe-2S]-[ferredoxin] + 2 S-adenosyl-L-methionine = (sulfur carrier)-H + biotin + 2 5'-deoxyadenosine + 2 L-methionine + 2 oxidized [2Fe-2S]-[ferredoxin]. Its pathway is cofactor biosynthesis; biotin biosynthesis; biotin from 7,8-diaminononanoate: step 2/2. Functionally, catalyzes the conversion of dethiobiotin (DTB) to biotin by the insertion of a sulfur atom into dethiobiotin via a radical-based mechanism. This Nitratidesulfovibrio vulgaris (strain DSM 19637 / Miyazaki F) (Desulfovibrio vulgaris) protein is Biotin synthase.